The primary structure comprises 281 residues: Insulin-like growth factor-binding protein 2 (281 aa).

Positions 1 to 21 are cleaved as a signal peptide; the sequence is MVLSEHLLVLLGAVLCAPALS. The region spanning 23–106 is the IGFBP N-terminal domain; that stretch reads VLFRCPPCSP…VLGLGTCGKR (84 aa). Disulfide bonds link C27-C56, C30-C58, C38-C59, C47-C62, C70-C83, and C77-C103. 2 disordered regions span residues 107–127 and 139–180; these read RDAE…DQSD and PAVP…RPAR. Basic and acidic residues predominate over residues 156-176; it reads VNRERANEQHRSKTNKSEDKK. Positions 180-262 constitute a Thyroglobulin type-1 domain; sequence RSLCQLQLDQ…SPTVRGDPEC (83 aa). Cystine bridges form between C183-C217, C228-C239, and C241-C262. Positions 257–259 match the Cell attachment site motif; sequence RGD.

Interacts with igf1 and igf2.

It is found in the secreted. Its function is as follows. IGF-binding proteins prolong the half-life of the IGFs and have been shown to either inhibit or stimulate the growth promoting effects of the IGFs on cell culture. They alter the interaction of IGFs with their cell surface receptors. This Xenopus laevis (African clawed frog) protein is Insulin-like growth factor-binding protein 2 (igfbp2).